Consider the following 312-residue polypeptide: tRNA dimethylallyltransferase (312 aa).

19–26 (GPSGSGKS) provides a ligand contact to ATP. Substrate is bound at residue 21 to 26 (SGSGKS). An interaction with substrate tRNA region spans residues 44–47 (DSLS).

The protein belongs to the IPP transferase family. In terms of assembly, monomer. The cofactor is Mg(2+).

The catalysed reaction is adenosine(37) in tRNA + dimethylallyl diphosphate = N(6)-dimethylallyladenosine(37) in tRNA + diphosphate. Its function is as follows. Catalyzes the transfer of a dimethylallyl group onto the adenine at position 37 in tRNAs that read codons beginning with uridine, leading to the formation of N6-(dimethylallyl)adenosine (i(6)A). The protein is tRNA dimethylallyltransferase of Helicobacter pylori (strain J99 / ATCC 700824) (Campylobacter pylori J99).